We begin with the raw amino-acid sequence, 68 residues long: ATP synthase subunit c (68 aa).

The next 2 membrane-spanning stretches (helical) occupy residues Ala-5–Val-25 and Phe-47–Val-67.

Belongs to the ATPase C chain family. In terms of assembly, F-type ATPases have 2 components, F(1) - the catalytic core - and F(0) - the membrane proton channel. F(1) has five subunits: alpha(3), beta(3), gamma(1), delta(1), epsilon(1). F(0) has three main subunits: a(1), b(2) and c(10-14). The alpha and beta chains form an alternating ring which encloses part of the gamma chain. F(1) is attached to F(0) by a central stalk formed by the gamma and epsilon chains, while a peripheral stalk is formed by the delta and b chains.

The protein localises to the cell membrane. F(1)F(0) ATP synthase produces ATP from ADP in the presence of a proton or sodium gradient. F-type ATPases consist of two structural domains, F(1) containing the extramembraneous catalytic core and F(0) containing the membrane proton channel, linked together by a central stalk and a peripheral stalk. During catalysis, ATP synthesis in the catalytic domain of F(1) is coupled via a rotary mechanism of the central stalk subunits to proton translocation. Functionally, key component of the F(0) channel; it plays a direct role in translocation across the membrane. A homomeric c-ring of between 10-14 subunits forms the central stalk rotor element with the F(1) delta and epsilon subunits. This chain is ATP synthase subunit c, found in Oceanobacillus iheyensis (strain DSM 14371 / CIP 107618 / JCM 11309 / KCTC 3954 / HTE831).